Here is a 555-residue protein sequence, read N- to C-terminus: Inositol 1,4,5-trisphosphate receptor-interacting protein (555 aa).

The first 15 residues, 1 to 15 (MAMELFRVCLVVVTA), serve as a signal peptide directing secretion. The Extracellular segment spans residues 16–81 (IINHPLLFPR…VEEEQQQLEA (66 aa)). An N-linked (GlcNAc...) asparagine glycan is attached at Asn-27. A coiled-coil region spans residues 32–84 (ENEEEIIRKMQEHQEKLRLEQLRLEEEVSRLEAEKEALRQVEEEQQQLEAHTA). A helical transmembrane segment spans residues 82 to 102 (HTAWDLWTTLCMVLFLIIEVL). The Cytoplasmic portion of the chain corresponds to 103–555 (RQNHQEGTFP…ASPPPKAVVS (453 aa)).

It belongs to the ITPRIP family. In terms of assembly, interacts with ITPR.

Its subcellular location is the cell membrane. The protein resides in the nucleus outer membrane. Enhances Ca(2+)-mediated inhibition of inositol 1,4,5-triphosphate receptor (ITPR) Ca(2+) release. The protein is Inositol 1,4,5-trisphosphate receptor-interacting protein (Itprip) of Mus musculus (Mouse).